The primary structure comprises 552 residues: 2-methyl-1,2-propanediol dehydrogenase (552 aa).

Belongs to the GMC oxidoreductase family. It depends on FAD as a cofactor.

It is found in the cytoplasm. The catalysed reaction is 2-methylpropane-1,2-diol + NAD(+) = 2-hydroxy-2-methylpropanal + NADH + H(+). Functionally, involved in the degradation of methyl tert-butyl ether (MTBE). Catalyzes the conversion of 2-methyl 1,2-propanediol (2-M1,2-PD) to hydroxyisobutyraldehyde. This Mycolicibacterium austroafricanum (Mycobacterium austroafricanum) protein is 2-methyl-1,2-propanediol dehydrogenase.